We begin with the raw amino-acid sequence, 68 residues long: Cytotoxic linear peptide IsCT (68 aa).

The N-terminal stretch at 1-23 is a signal peptide; it reads MKTQFAILLVALVLFQMFAQSDA. Phenylalanine amide is present on Phe36. The propeptide occupies 40–68; sequence GLSDLDGLDELFDGEISKADRDFLRELMR.

Belongs to the non-disulfide-bridged peptide (NDBP) superfamily. Short antimicrobial peptide (group 4) family. In terms of processing, isCTf is an enzymatic proteolytic cleavage product of IsCT by the proteases present in the venom. Expressed by the venom gland.

The protein resides in the secreted. It localises to the target cell membrane. Shows weak hemolytic activity and antibacterial activity against both Gram-positive and Gram-negative bacteria probably by forming pores in the cell membrane. IsCT adopts an amphipathic alpha-helical structure. Functionally, shows neither hemolytic, nor antibacterial activities, probably because it cannot adopt amphipathic alpha-helical structure. The polypeptide is Cytotoxic linear peptide IsCT (Opisthacanthus madagascariensis (Scorpion)).